The sequence spans 178 residues: Cell wall-binding protein YwsB (178 aa).

Residues 1 to 30 form the signal peptide; sequence MNKPTKLFSTLALAAGMTAAAAGGAGTIHA. SH3b domains are found at residues 47–111 and 116–178; these read IDSY…VKAA and TKTK…HMTK.

It localises to the secreted. Its subcellular location is the cell wall. Its activity is regulated as follows. Increases in stationary phase in a strain lacking the WprA protease. The sequence is that of Cell wall-binding protein YwsB (ywsB) from Bacillus subtilis (strain 168).